A 341-amino-acid chain; its full sequence is ATPase GET3 (341 aa).

34-41 lines the ATP pocket; it reads KGGVGKTT. Asp63 is an active-site residue. Positions 245 and 272 each coordinate ATP. Zn(2+) is bound by residues Cys283 and Cys286.

This sequence belongs to the arsA ATPase family. Homodimer.

It is found in the cytoplasm. The protein localises to the endoplasmic reticulum. ATPase required for the post-translational delivery of tail-anchored (TA) proteins to the endoplasmic reticulum. Recognizes and selectively binds the transmembrane domain of TA proteins in the cytosol. This complex then targets to the endoplasmic reticulum by membrane-bound receptors, where the tail-anchored protein is released for insertion. This process is regulated by ATP binding and hydrolysis. ATP binding drives the homodimer towards the closed dimer state, facilitating recognition of newly synthesized TA membrane proteins. ATP hydrolysis is required for insertion. Subsequently, the homodimer reverts towards the open dimer state, lowering its affinity for the membrane-bound receptor, and returning it to the cytosol to initiate a new round of targeting. In Paracoccidioides lutzii (strain ATCC MYA-826 / Pb01) (Paracoccidioides brasiliensis), this protein is ATPase GET3.